The chain runs to 340 residues: MVFSSVSSFLDPPINWPQSANPNNHPHHHQLQENGSLVSGHHQVLSHHFPQNPNPNHHHVETAAATTVDPSSLNGQAAERARLAKNSQPPEGALKCPRCDSANTKFCYFNNYNLTQPRHFCKACRRYWTRGGALRNVPVGGGCRRNKKGKSGNSKSSSSSQNKQSTSMVNATSPTNTSNVQLQTNSQFPFLPTLQNLTQLGGIGLNLAAINGNNGGNGNTSSSFLNDLGFFHGGNTSGPVMGNNNENNLMTSLGSSSHFALFDRTMGLYNFPNEVNMGLSSIGATRVSQTAQVKMEDNHLGNISRPVSGLTSPGNQSNQYWTGQGLPGSSSNDHHHQHLM.

A disordered region spans residues 12–33; sequence PPINWPQSANPNNHPHHHQLQE. The Dof-type zinc-finger motif lies at 94-148; that stretch reads LKCPRCDSANTKFCYFNNYNLTQPRHFCKACRRYWTRGGALRNVPVGGGCRRNKK. Zn(2+) is bound by residues Cys-96, Cys-99, Cys-121, and Cys-124. Disordered stretches follow at residues 138-180 and 301-340; these read PVGG…TSNV and GNISRPVSGLTSPGNQSNQYWTGQGLPGSSSNDHHHQHLM. Residues 151–165 are compositionally biased toward low complexity; the sequence is SGNSKSSSSSQNKQS. Composition is skewed to polar residues over residues 166–180 and 309–331; these read TSMVNATSPTNTSNV and GLTSPGNQSNQYWTGQGLPGSSS.

It localises to the nucleus. In terms of biological role, transcription factor that binds specifically to a 5'-AA[AG]G-3' consensus core sequence. The sequence is that of Dof zinc finger protein DOF2.2 (DOF2.2) from Arabidopsis thaliana (Mouse-ear cress).